The following is a 650-amino-acid chain: AP-1-like transcription factor YAP1 (650 aa).

The segment at 1–89 (MSVSTAKRSL…AFRERKERKM (89 aa)) is disordered. Serine 9, serine 14, and serine 17 each carry phosphoserine. Basic and acidic residues-rich tracts occupy residues 22-50 (EGSKSRHDEIENEHRRTGTRDGEDSEQPK), 58-68 (KKQDLDPETKQ), and 80-89 (AFRERKERKM). 2 consecutive short sequence motifs (bipartite nuclear localization signal) follow at residues 35-42 (HRRTGTRD) and 68-75 (QKRTAQNR). A bZIP domain is found at 64 to 127 (PETKQKRTAQ…ITLVNELKKY (64 aa)). The basic motif stretch occupies residues 67 to 90 (KQKRTAQNRAAQRAFRERKERKMK). Positions 92–120 (LEKKVQSLESIQQQNEVEATFLRDQLITL) are leucine-zipper. Disordered stretches follow at residues 149 to 169 (HFSKNNVNHSNSEPIDTPNDD) and 183 to 251 (QYPL…PNSS). Positions 150-162 (FSKNNVNHSNSEP) are enriched in polar residues. The residue at position 165 (threonine 165) is a Phosphothreonine. The span at 195–209 (SKNVGKQLPSPNDPS) shows a compositional bias: polar residues. Serine 204 is modified (phosphoserine). The interval 220–378 (QKKLSDATDS…YENSFSGFGR (159 aa)) is transcription activation 1. Residues 226 to 246 (ATDSSSATLDSLSNSNDVLNN) are compositionally biased toward low complexity. A n-CRD region spans residues 303–315 (CSKMNQVCGTRQC). 5 disulfides stabilise this stretch: cysteine 303–cysteine 598, cysteine 310–cysteine 629, cysteine 598–cysteine 620, cysteine 598–cysteine 629, and cysteine 620–cysteine 629. At serine 372 the chain carries Phosphoserine. Low complexity predominate over residues 392-414 (DNSTGSTDSTGSTGNKNKKNNNN). 3 disordered regions span residues 392 to 419 (DNSTGSTDSTGSTGNKNKKNNNNSDDVL), 510 to 532 (LFGEFLEDDDDDKKAANMSDDES), and 551 to 591 (LQSV…VPSK). Positions 430–537 (NQVTNFFSPG…SDDESSLIKN (108 aa)) are transcription activation 2. Serine 528 carries the post-translational modification Phosphoserine. The span at 551 to 570 (LQSVPGNESEISQKNGSSLQ) shows a compositional bias: polar residues. A compositionally biased stretch (low complexity) spans 571-580 (NADKINNGND). Positions 598-629 (CSEIWDRITTHPKYSDIDVDGLCSELMAKAKC) are c-CRD. Residues 614 to 621 (IDVDGLCS) carry the Nuclear export signal motif.

The protein belongs to the bZIP family. YAP subfamily. Interacts independent of oxidation state in the cytoplasm with the karyopherin PSE1/KAP121 (and less strongly with KAP123). The reduced form of YAP1 interacts in the nucleus with the nuclear export protein CRM1, and in the cytoplasm with YBP1 and the peroxiredoxin HYR1/GPX3/ORP1. Interacts with RBG1. In terms of processing, depending on the oxidative stress inducing agent, YAP1 can undergo two distinct conformational changes, both involving disulfide bond formation, and both masking the nuclear export signal, thus abolishing nuclear export by CRM1/exportin 1. The disulfide stress-inducing agent diamide leads to the formation of one of three possible disulfide bonds in the c-CRD. Peroxide stress induces the formation of the HYR1/GPX3- and YBP1-dependent interdomain disulfide bond between Cys-303 and Cys-598 (causing nuclear localization of YAP1), and the possibly stabilizing bond between Cys-310 and Cys-629 (required for full activity of YAP1).

The protein resides in the nucleus. It localises to the cytoplasm. Transcription activator involved in oxidative stress response and redox homeostasis. Regulates the transcription of genes encoding antioxidant enzymes and components of the cellular thiol-reducing pathways, including the thioredoxin system (TRX2, TRR1), the glutaredoxin system (GSH1, GLR1), superoxide dismutase (SOD1, SOD2), glutathione peroxidase (GPX2), and thiol-specific peroxidases (TSA1, AHP1). The induction of some of these genes requires the cooperative action of both, YAP1 and SKN7. Preferentially binds to promoters with the core binding site 5'-TTA[CG]TAA-3'. Activity of the transcription factor is controlled through oxidation of specific cysteine residues resulting in the alteration of its subcellular location. Oxidative stress (as well as carbon stress, but not increased temperature, acidic pH, or ionic stress) induces nuclear accumulation and as a result YAP1 transcriptional activity. Activation by hydrogen peroxide or thiol-reactive chemicals elicit distinct adaptive gene responses. Nuclear export is restored when disulfide bonds are reduced by thioredoxin (TRX2), whose expression is controlled by YAP1, providing a mechanism for negative autoregulation. When overexpressed, YAP1 confers pleiotropic drug-resistance and increases cellular tolerance to cadmium, iron chelators and zinc. The chain is AP-1-like transcription factor YAP1 from Saccharomyces cerevisiae (strain ATCC 204508 / S288c) (Baker's yeast).